The sequence spans 482 residues: Chromosomal replication initiator protein DnaA (482 aa).

The interval 1-71 (MKQSILFERV…TGLFQAEDPE (71 aa)) is domain I, interacts with DnaA modulators. The domain II stretch occupies residues 71–139 (EILKIEVLVR…ASFGSPLFGS (69 aa)). Residues 140–362 (PLDSRFTFDT…GAFNQLVFRR (223 aa)) form a domain III, AAA+ region region. Residues Gly186, Gly188, Lys189, and Thr190 each coordinate ATP. The segment at 363 to 482 (SFEPNLSIER…VELLKRLINE (120 aa)) is domain IV, binds dsDNA.

This sequence belongs to the DnaA family. As to quaternary structure, oligomerizes as a right-handed, spiral filament on DNA at oriC.

It is found in the cytoplasm. Functionally, plays an essential role in the initiation and regulation of chromosomal replication. ATP-DnaA binds to the origin of replication (oriC) to initiate formation of the DNA replication initiation complex once per cell cycle. Binds the DnaA box (a 9 base pair repeat at the origin) and separates the double-stranded (ds)DNA. Forms a right-handed helical filament on oriC DNA; dsDNA binds to the exterior of the filament while single-stranded (ss)DNA is stabiized in the filament's interior. The ATP-DnaA-oriC complex binds and stabilizes one strand of the AT-rich DNA unwinding element (DUE), permitting loading of DNA polymerase. After initiation quickly degrades to an ADP-DnaA complex that is not apt for DNA replication. Binds acidic phospholipids. The chain is Chromosomal replication initiator protein DnaA from Rhizobium johnstonii (strain DSM 114642 / LMG 32736 / 3841) (Rhizobium leguminosarum bv. viciae).